Here is a 327-residue protein sequence, read N- to C-terminus: 4-hydroxy-2-oxoglutarate aldolase, mitochondrial (327 aa).

The transit peptide at methionine 1–tryptophan 25 directs the protein to the mitochondrion. A substrate-binding site is contributed by serine 77 to asparagine 78. Lysine 196 serves as the catalytic Schiff-base intermediate with substrate. Serine 198 and glycine 222 together coordinate substrate.

Belongs to the DapA family. As to quaternary structure, homotetramer.

It is found in the mitochondrion. It catalyses the reaction (4S)-4-hydroxy-2-oxoglutarate = glyoxylate + pyruvate. The catalysed reaction is (4R)-4-hydroxy-2-oxoglutarate = glyoxylate + pyruvate. Inhibited by divalent cations. Its function is as follows. Catalyzes the final step in the metabolic pathway of hydroxyproline. The polypeptide is 4-hydroxy-2-oxoglutarate aldolase, mitochondrial (HOGA1) (Homo sapiens (Human)).